The following is a 1768-amino-acid chain: Maestro heat-like repeat-containing protein family member 1 homolog (1768 aa).

HEAT repeat units lie at residues 4-47, 164-203, 816-856, 1166-1204, 1483-1521, and 1731-1768; these read TSQV…HQPN, VHNPFGLVPFLTDILSRTVPLLQHVKTDPLRCAWARAICS, QRLQ…AVHP, QSQMQIYLSAIFEMLTDRQSHVSSAAAQLLTYAVMARGA, EQLLVKCIRRLEDSLTDPSLRIRKLCVKGLGELSECSST, and TISRELVFTGLVALLKDSEDVNVRISATRAIANLHDFH.

This sequence belongs to the MROH1 family. As to quaternary structure, homooligomer; homooligomerizes at lysosome scission sites.

Its subcellular location is the lysosome membrane. Functionally, lysosome fission factor. Recruited to lysosomes by rab-7 at scission sites and homooligomerizes to mediate the constriction and scission of lysosomal tubules. May sever membranes by inserting amphipathic helices into one bilayer leaflet. Lysosome fission is required to maintain their steady-state number, shape, size, composition and function, and to accomplish regeneration. The polypeptide is Maestro heat-like repeat-containing protein family member 1 homolog (Caenorhabditis elegans).